We begin with the raw amino-acid sequence, 415 residues long: Imidazolonepropionase (415 aa).

Fe(3+)-binding residues include histidine 76 and histidine 78. Zn(2+)-binding residues include histidine 76 and histidine 78. 4-imidazolone-5-propanoate contacts are provided by arginine 85, tyrosine 148, and histidine 181. Tyrosine 148 serves as a coordination point for N-formimidoyl-L-glutamate. Residue histidine 246 coordinates Fe(3+). Zn(2+) is bound at residue histidine 246. Residue glutamate 249 participates in 4-imidazolone-5-propanoate binding. A Fe(3+)-binding site is contributed by aspartate 320. A Zn(2+)-binding site is contributed by aspartate 320. Positions 322 and 324 each coordinate N-formimidoyl-L-glutamate. Threonine 325 is a 4-imidazolone-5-propanoate binding site.

It belongs to the metallo-dependent hydrolases superfamily. HutI family. The cofactor is Zn(2+). Requires Fe(3+) as cofactor.

It is found in the cytoplasm. It carries out the reaction 4-imidazolone-5-propanoate + H2O = N-formimidoyl-L-glutamate. Its pathway is amino-acid degradation; L-histidine degradation into L-glutamate; N-formimidoyl-L-glutamate from L-histidine: step 3/3. Catalyzes the hydrolytic cleavage of the carbon-nitrogen bond in imidazolone-5-propanoate to yield N-formimidoyl-L-glutamate. It is the third step in the universal histidine degradation pathway. The chain is Imidazolonepropionase from Thermoanaerobacter pseudethanolicus (strain ATCC 33223 / 39E) (Clostridium thermohydrosulfuricum).